Consider the following 242-residue polypeptide: Small ribosomal subunit protein eS4 (242 aa).

Residues 43-106 (LPLMIIVRDI…GDVYRVLPDE (64 aa)) form the S4 RNA-binding domain.

It belongs to the eukaryotic ribosomal protein eS4 family.

In Methanothermobacter thermautotrophicus (strain ATCC 29096 / DSM 1053 / JCM 10044 / NBRC 100330 / Delta H) (Methanobacterium thermoautotrophicum), this protein is Small ribosomal subunit protein eS4 (rps4e).